The chain runs to 517 residues: Salicyloyl-CoA 5-hydroxylase (517 aa).

It belongs to the aromatic-ring hydroxylase family. KMO subfamily.

It carries out the reaction 2-hydroxybenzoyl-CoA + NADH + O2 + H(+) = 2,5-dihydroxybenzoyl-CoA + NAD(+) + H2O. Involved in the degradation of salicylate via a pathway involving coenzyme A derivative. Catalyzes the aromatic hydroxylation of salicylyl-CoA to yield gentisyl-CoA. In Streptomyces sp, this protein is Salicyloyl-CoA 5-hydroxylase.